The primary structure comprises 113 residues: Large ribosomal subunit protein eL36z (113 aa).

Residues Arg-78 to Arg-88 show a composition bias toward basic residues. Residues Arg-78–Met-113 form a disordered region.

The protein belongs to the eukaryotic ribosomal protein eL36 family.

The sequence is that of Large ribosomal subunit protein eL36z (RPL36A) from Arabidopsis thaliana (Mouse-ear cress).